The following is a 100-amino-acid chain: Large ribosomal subunit protein uL23 (100 aa).

It belongs to the universal ribosomal protein uL23 family. In terms of assembly, part of the 50S ribosomal subunit. Contacts protein L29, and trigger factor when it is bound to the ribosome.

In terms of biological role, one of the early assembly proteins it binds 23S rRNA. One of the proteins that surrounds the polypeptide exit tunnel on the outside of the ribosome. Forms the main docking site for trigger factor binding to the ribosome. This Thermotoga maritima (strain ATCC 43589 / DSM 3109 / JCM 10099 / NBRC 100826 / MSB8) protein is Large ribosomal subunit protein uL23.